The chain runs to 558 residues: Putative cation/proton antiporter YbaL (558 aa).

Topologically, residues 1-3 (MHH) are periplasmic. Residues 4–24 (ATPLITTIVGGLVLAFILGML) form a helical membrane-spanning segment. Over 25–31 (ANKLRIS) the chain is Cytoplasmic. Residues 32-52 (PLVGYLLAGVLAGPFTPGFVA) form a helical membrane-spanning segment. Residues 53–55 (DTK) are Periplasmic-facing. Residues 56 to 76 (LAPELAELGVILLMFGVGLHF) form a helical membrane-spanning segment. The Cytoplasmic segment spans residues 77 to 85 (SLKDLMAVK). Residues 86–106 (AIAIPGAIAQIAVATLLGMAL) form a helical membrane-spanning segment. The Periplasmic portion of the chain corresponds to 107–112 (SAVLGW). Residues 113 to 133 (SLMTGIVFGLCLSTASTVVLL) form a helical membrane-spanning segment. The Cytoplasmic portion of the chain corresponds to 134-148 (RALEERQLIDSQRGQ). A helical transmembrane segment spans residues 149–169 (IAIGWLIVEDLVMVLTLVLLP). The Periplasmic portion of the chain corresponds to 170–185 (AVAGMMEQGDVGFATL). A helical membrane pass occupies residues 186-206 (AVDMGITIGKVIAFIAIMMLV). Over 207–225 (GRRLVPWIMARSAATGSRE) the chain is Cytoplasmic. A helical transmembrane segment spans residues 226-246 (LFTLSVLALALGVAFGAVELF). Residue Asp-247 is a topological domain, periplasmic. The helical transmembrane segment at 248–268 (VSFALGAFFAGMVLNESELSH) threads the bilayer. The Cytoplasmic segment spans residues 269–279 (RAAHDTLPLRD). The helical transmembrane segment at 280-300 (AFAVLFFVSVGMLFDPLILIQ) threads the bilayer. Over 301–303 (QPL) the chain is Periplasmic. The chain crosses the membrane as a helical span at residues 304 to 324 (AVLATLAIILFGKSLAAFFLV). Residues 325 to 336 (RLFGHSQRTALT) are Cytoplasmic-facing. Residues 337–357 (IAASLAQIGEFAFILAGLGMA) traverse the membrane as a helical segment. Residues 358–367 (LNLLPQAGQN) are Periplasmic-facing. The chain crosses the membrane as a helical span at residues 368–388 (LVLAGAILSIMLNPVLFALLE). Residues 389 to 558 (KYLAKTETLE…TPPAGEVVTG (170 aa)) lie on the Cytoplasmic side of the membrane. Residues 417 to 534 (CNHALLVGYG…TERGANQVVM (118 aa)) enclose the RCK N-terminal domain. AMP-binding positions include 427 to 428 (RV), 447 to 448 (ET), 467 to 468 (NA), Glu-494, and Arg-514.

The protein belongs to the monovalent cation:proton antiporter 2 (CPA2) transporter (TC 2.A.37) family.

It localises to the cell inner membrane. This is Putative cation/proton antiporter YbaL (ybaL) from Escherichia coli (strain K12).